The primary structure comprises 193 residues: Ribosome maturation factor RimM (193 aa).

In terms of domain architecture, PRC barrel spans D97–V172. A disordered region spans residues P168–D193. Basic and acidic residues predominate over residues G173 to D193.

The protein belongs to the RimM family. Binds ribosomal protein uS19.

It is found in the cytoplasm. Its function is as follows. An accessory protein needed during the final step in the assembly of 30S ribosomal subunit, possibly for assembly of the head region. Essential for efficient processing of 16S rRNA. May be needed both before and after RbfA during the maturation of 16S rRNA. It has affinity for free ribosomal 30S subunits but not for 70S ribosomes. The chain is Ribosome maturation factor RimM from Caulobacter vibrioides (strain ATCC 19089 / CIP 103742 / CB 15) (Caulobacter crescentus).